The sequence spans 61 residues: Small ribosomal subunit protein uS14 (61 aa).

The Zn(2+) site is built by C24, C27, C40, and C43.

Belongs to the universal ribosomal protein uS14 family. Zinc-binding uS14 subfamily. Part of the 30S ribosomal subunit. Contacts proteins S3 and S10. Zn(2+) serves as cofactor.

Binds 16S rRNA, required for the assembly of 30S particles and may also be responsible for determining the conformation of the 16S rRNA at the A site. This Bacillus anthracis (strain A0248) protein is Small ribosomal subunit protein uS14.